The following is a 118-amino-acid chain: Ribonuclease P protein component (118 aa).

Belongs to the RnpA family. Consists of a catalytic RNA component (M1 or rnpB) and a protein subunit.

It carries out the reaction Endonucleolytic cleavage of RNA, removing 5'-extranucleotides from tRNA precursor.. RNaseP catalyzes the removal of the 5'-leader sequence from pre-tRNA to produce the mature 5'-terminus. It can also cleave other RNA substrates such as 4.5S RNA. The protein component plays an auxiliary but essential role in vivo by binding to the 5'-leader sequence and broadening the substrate specificity of the ribozyme. This is Ribonuclease P protein component from Rickettsia canadensis (strain McKiel).